A 900-amino-acid chain; its full sequence is Alanine--tRNA ligase (900 aa).

Residues His-567, His-571, Cys-671, and His-675 each contribute to the Zn(2+) site.

This sequence belongs to the class-II aminoacyl-tRNA synthetase family. Zn(2+) is required as a cofactor.

It localises to the cytoplasm. It carries out the reaction tRNA(Ala) + L-alanine + ATP = L-alanyl-tRNA(Ala) + AMP + diphosphate. In terms of biological role, catalyzes the attachment of alanine to tRNA(Ala) in a two-step reaction: alanine is first activated by ATP to form Ala-AMP and then transferred to the acceptor end of tRNA(Ala). Also edits incorrectly charged Ser-tRNA(Ala) and Gly-tRNA(Ala) via its editing domain. In Mycoplasma pneumoniae (strain ATCC 29342 / M129 / Subtype 1) (Mycoplasmoides pneumoniae), this protein is Alanine--tRNA ligase.